An 80-amino-acid chain; its full sequence is FXYD domain-containing ion transport regulator 7 (80 aa).

At Met-1 to Tyr-22 the chain is on the extracellular side. O-linked (GlcNAc) threonine glycans are attached at residues Thr-3, Thr-5, and Thr-9. The chain crosses the membrane as a helical span at residues Ala-23–Ile-45. Topologically, residues Ser-46 to Val-80 are cytoplasmic. The interval Ser-56–Val-80 is disordered. Ser-73 is modified (phosphoserine).

It belongs to the FXYD family. As to quaternary structure, regulatory subunit of the sodium/potassium-transporting ATPase which is composed of a catalytic alpha subunit, a non-catalytic beta subunit and an additional regulatory subunit. The regulatory subunit, a member of the FXYD protein family, modulates the enzymatic activity in a tissue- and isoform-specific way by changing affinities of the Na+/K+-ATPase toward Na(+), K(+) or ATP. In terms of processing, O-glycosylated; required for stabilization and translocation to the plasma membrane. As to expression, expressed specifically in brain. Expressed in both neurons and glia.

The protein resides in the cell membrane. Functionally, associates with and regulates the activity of the sodium/potassium-transporting ATPase (NKA) which catalyzes the hydrolysis of ATP coupled with the exchange of Na(+) and K(+) ions across the plasma membrane. Reduces the apparent affinity for external K(+), an effect that depends on the presence of external Na(+) and voltage. Increases the apparent affinity for intracellular Na(+). This Rattus norvegicus (Rat) protein is FXYD domain-containing ion transport regulator 7 (Fxyd7).